The chain runs to 280 residues: Succinate dehydrogenase [ubiquinone] iron-sulfur subunit, mitochondrial (280 aa).

A mitochondrion-targeting transit peptide spans 1-28 (MAAVVAVSLKRWFPATTLGGACLQACRG). The region spanning 40 to 131 (KKFAIYRWDP…DKVSKIYPLP (92 aa)) is the 2Fe-2S ferredoxin-type domain. An N6-acetyllysine mark is found at K51 and K55. [2Fe-2S] cluster contacts are provided by C93, C98, C101, and C113. The tract at residues 146–218 (FYAQYKSIEP…PAVLMQAYRW (73 aa)) is interaction with SDHAF1. In terms of domain architecture, 4Fe-4S ferredoxin-type spans 176–206 (EREKLDGLYECILCACCSTSCPSYWWNGDKY). [4Fe-4S] cluster is bound by residues C186, C189, and C192. C196 is a binding site for [3Fe-4S] cluster. W201 is a binding site for a ubiquinone. Positions 243 and 249 each coordinate [3Fe-4S] cluster. Residue C253 participates in [4Fe-4S] cluster binding.

It belongs to the succinate dehydrogenase/fumarate reductase iron-sulfur protein family. Component of complex II composed of four subunits: the flavoprotein (FP) SDHA, iron-sulfur protein (IP) SDHB, and a cytochrome b560 composed of SDHC and SDHD. Interacts with SDHAF1; the interaction is required for iron-sulfur cluster incorporation into SDHB. [2Fe-2S] cluster serves as cofactor. Requires [3Fe-4S] cluster as cofactor. [4Fe-4S] cluster is required as a cofactor.

It is found in the mitochondrion inner membrane. It carries out the reaction a quinone + succinate = fumarate + a quinol. The catalysed reaction is (R)-malate + a quinone = enol-oxaloacetate + a quinol. It catalyses the reaction (S)-malate + a quinone = enol-oxaloacetate + a quinol. It participates in carbohydrate metabolism; tricarboxylic acid cycle; fumarate from succinate (eukaryal route): step 1/1. With respect to regulation, enol-oxaloacetate inhibits the succinate dehydrogenase activity. In terms of biological role, iron-sulfur protein (IP) subunit of the succinate dehydrogenase complex (mitochondrial respiratory chain complex II), responsible for transferring electrons from succinate to ubiquinone (coenzyme Q). SDH also oxidizes malate to the non-canonical enol form of oxaloacetate, enol-oxaloacetate. Enol-oxaloacetate, which is a potent inhibitor of the succinate dehydrogenase activity, is further isomerized into keto-oxaloacetate. The chain is Succinate dehydrogenase [ubiquinone] iron-sulfur subunit, mitochondrial (SDHB) from Sus scrofa (Pig).